The primary structure comprises 572 residues: Probable D-xylulose kinase A (572 aa).

4 residues coordinate substrate: histidine 95, arginine 166, aspartate 282, and asparagine 283. Residues tryptophan 365, 470–471 (GG), and asparagine 474 each bind ATP.

Belongs to the FGGY kinase family.

It is found in the cytoplasm. The catalysed reaction is D-xylulose + ATP = D-xylulose 5-phosphate + ADP + H(+). Functionally, highly specific D-xylulose kinase which participates in the catabolism of xylose. Xylose is a major component of hemicelluloses such as xylan. Most fungi utilize D-xylose via three enzymatic reactions, xylose reductase (XR), xylitol dehydrogenase (XDH), and xylulokinase, to form xylulose 5-phosphate, which enters pentose phosphate pathway. The sequence is that of Probable D-xylulose kinase A (xkiA) from Aspergillus oryzae (strain ATCC 42149 / RIB 40) (Yellow koji mold).